The chain runs to 236 residues: uncharacterized protein (236 aa).

A signal peptide spans 1–26 (MTNTWNRLALLIFAVLSLLVAGELQA).

It belongs to the periplasmic pilus chaperone family.

The protein localises to the periplasm. Part of the elfADCG-ycbUVF fimbrial operon, which promotes adhesion of bacteria to different abiotic surfaces. Could be required for the biogenesis of fimbriae. This is an uncharacterized protein from Escherichia coli (strain K12).